Consider the following 109-residue polypeptide: Serine protease inhibitor (109 aa).

A signal peptide spans 1–28 (MKMKLLQVHFVLLVSSSFLLGYTGMVTA). Intrachain disulfides connect Cys43/Cys83, Cys52/Cys79, Cys58/Cys73, Cys62/Cys104, and Cys85/Cys98. The 62-residue stretch at 43–104 (CRENEIFSQC…QGVCILENSC (62 aa)) folds into the TIL domain.

It belongs to the serine protease inhibitor-like (TIL domain-containing) family. Ubiquitously expressed (at protein level), including in venom glands. Found more precisely in the epidermis, fat body, gut, muscle, and venom of worker bees.

The protein resides in the secreted. Dual role peptide that functions as a broad-spectrum antimicrobial peptide and antifibrinolytic toxin. Inhibits trypsin (IC(50)=375 nM), plasmin (IC(50)=2140 nM), and microbial serine proteases (subtilisin A (IC(50)=294 nM) and proteinase K (IC(50)=459 nM)). Exhibits antifibrinolytic activity by binding and inhibiting plasmin. Does not inhibit chymotrypsin, elastase or thrombin. Binds to microbial cell wall carbohydrates (LPS, mannan and N-acetyl-D-glucosamine) and shows antimicrobial activity (MIC=4.1 uM against B.thuringiensis, MIC=4.95 uM against E.coli, MIC=9.6 uM against the fungus B.bassiana). Does not show hemolytic activity. The protein is Serine protease inhibitor of Bombus ignitus (Bumblebee).